We begin with the raw amino-acid sequence, 611 residues long: UvrABC system protein C (611 aa).

The 79-residue stretch at glutamine 19 to valine 97 folds into the GIY-YIG domain. The UVR domain occupies asparagine 207 to valine 242.

It belongs to the UvrC family. As to quaternary structure, interacts with UvrB in an incision complex.

The protein localises to the cytoplasm. The UvrABC repair system catalyzes the recognition and processing of DNA lesions. UvrC both incises the 5' and 3' sides of the lesion. The N-terminal half is responsible for the 3' incision and the C-terminal half is responsible for the 5' incision. The chain is UvrABC system protein C from Alkalilimnicola ehrlichii (strain ATCC BAA-1101 / DSM 17681 / MLHE-1).